The primary structure comprises 461 residues: Type IV secretion system protein PtlD homolog (461 aa).

The N-terminal stretch at 1 to 24 (MAGLSRILLSCTLACLLAGQAAQA) is a signal peptide. Transmembrane regions (helical) follow at residues 118–138 (LQPLVYSMMTLLVLLTGYALL), 232–252 (WLLCAMIVAASAGGWLCLAAS), 253–273 (LLIVPGLIVTLLLSLGPLFLV), 294–314 (ALVFMALGTPAVGLLSDVLAG), and 333–353 (MLAATLCATATLMLLTLVPLA). Over residues 376–411 (AHRQAAARQYAPRPAAAAAAAGPHQAGTYAASATPA) the composition is skewed to low complexity. The disordered stretch occupies residues 376–461 (AHRQAAARQY…RVLPRKPNLP (86 aa)). The span at 439–453 (VRRDDRPAPAPDRRV) shows a compositional bias: basic and acidic residues.

The protein resides in the cell membrane. The sequence is that of Type IV secretion system protein PtlD homolog (ptlD) from Bordetella bronchiseptica (strain ATCC BAA-588 / NCTC 13252 / RB50) (Alcaligenes bronchisepticus).